A 548-amino-acid polypeptide reads, in one-letter code: Peptide chain release factor 3 (548 aa).

A tr-type G domain is found at 23 to 290 (ERRRTFGIIS…ALLDWAPPPQ (268 aa)). Residues 32-39 (SHPDAGKT), 100-104 (DTPGH), and 154-157 (NKMD) each bind GTP.

It belongs to the TRAFAC class translation factor GTPase superfamily. Classic translation factor GTPase family. PrfC subfamily.

Its subcellular location is the cytoplasm. Functionally, increases the formation of ribosomal termination complexes and stimulates activities of RF-1 and RF-2. It binds guanine nucleotides and has strong preference for UGA stop codons. It may interact directly with the ribosome. The stimulation of RF-1 and RF-2 is significantly reduced by GTP and GDP, but not by GMP. The chain is Peptide chain release factor 3 from Aromatoleum aromaticum (strain DSM 19018 / LMG 30748 / EbN1) (Azoarcus sp. (strain EbN1)).